The following is a 625-amino-acid chain: Complex I assembly factor ACAD9, mitochondrial (625 aa).

A mitochondrion-targeting transit peptide spans 1–41 (MSGYVLFSRGATAAAAAARASRVLRVFTERRRTLHTSLQSC). At Lys-45 the chain carries N6-acetyllysine. Lys-96 bears the N6-succinyllysine mark. Residue Glu-430 is the Proton acceptor of the active site. Thr-482 bears the Phosphothreonine mark. N6-acetyllysine; alternate is present on Lys-525. The residue at position 525 (Lys-525) is an N6-succinyllysine; alternate.

Belongs to the acyl-CoA dehydrogenase family. Homodimer. Interacts with NDUFAF1 and ECSIT. Part of the mitochondrial complex I assembly/MCIA complex that comprises at least the core subunits TMEM126B, NDUFAF1, ECSIT and ACAD9 and complement subunits such as COA1 and TMEM186. Interacts with TMEM70 and TMEM242. It depends on FAD as a cofactor.

The protein localises to the mitochondrion inner membrane. It catalyses the reaction eicosanoyl-CoA + oxidized [electron-transfer flavoprotein] + H(+) = (2E)-eicosenoyl-CoA + reduced [electron-transfer flavoprotein]. The enzyme catalyses octadecanoyl-CoA + oxidized [electron-transfer flavoprotein] + H(+) = (2E)-octadecenoyl-CoA + reduced [electron-transfer flavoprotein]. It carries out the reaction oxidized [electron-transfer flavoprotein] + hexadecanoyl-CoA + H(+) = (2E)-hexadecenoyl-CoA + reduced [electron-transfer flavoprotein]. The catalysed reaction is decanoyl-CoA + oxidized [electron-transfer flavoprotein] + H(+) = (2E)-decenoyl-CoA + reduced [electron-transfer flavoprotein]. It catalyses the reaction nonanoyl-CoA + oxidized [electron-transfer flavoprotein] + H(+) = (2E)-nonenoyl-CoA + reduced [electron-transfer flavoprotein]. The enzyme catalyses pentadecanoyl-CoA + oxidized [electron-transfer flavoprotein] + H(+) = (2E)-pentadecenoyl-CoA + reduced [electron-transfer flavoprotein]. It carries out the reaction undecanoyl-CoA + oxidized [electron-transfer flavoprotein] + H(+) = trans-2-undecenoyl-CoA + reduced [electron-transfer flavoprotein]. The catalysed reaction is (9Z)-hexadecenoyl-CoA + oxidized [electron-transfer flavoprotein] + H(+) = (2E,9Z)-hexadecadienoyl-CoA + reduced [electron-transfer flavoprotein]. It catalyses the reaction heptadecanoyl-CoA + oxidized [electron-transfer flavoprotein] + H(+) = trans-2-heptadecenoyl-CoA + reduced [electron-transfer flavoprotein]. The enzyme catalyses (9E)-octadecenoyl-CoA + oxidized [electron-transfer flavoprotein] + H(+) = (2E,9E)-octadecadienoyl-CoA + reduced [electron-transfer flavoprotein]. It carries out the reaction oxidized [electron-transfer flavoprotein] + (9Z)-octadecenoyl-CoA + H(+) = (2E,9Z)-octadecadienoyl-CoA + reduced [electron-transfer flavoprotein]. The catalysed reaction is (9Z,12Z)-octadecadienoyl-CoA + oxidized [electron-transfer flavoprotein] + H(+) = (2E,9Z,12Z)-octadecatrienoyl-CoA + reduced [electron-transfer flavoprotein]. It catalyses the reaction (4Z,7Z,10Z,13Z,16Z,19Z)-docosahexaenoyl-CoA + oxidized [electron-transfer flavoprotein] + H(+) = (2E,4Z,7Z,10Z,13Z,16Z,19Z)-docosaheptaenoyl-CoA + reduced [electron-transfer flavoprotein]. The enzyme catalyses tetradecanoyl-CoA + oxidized [electron-transfer flavoprotein] + H(+) = (2E)-tetradecenoyl-CoA + reduced [electron-transfer flavoprotein]. In terms of biological role, as part of the MCIA complex, primarily participates in the assembly of the mitochondrial complex I and therefore plays a role in oxidative phosphorylation. This moonlighting protein also has a dehydrogenase activity toward a broad range of substrates with greater specificity for long-chain unsaturated acyl-CoAs. However, in vivo, it does not seem to play a primary role in fatty acid oxidation. In addition, the function in complex I assembly is independent of the dehydrogenase activity of the protein. This chain is Complex I assembly factor ACAD9, mitochondrial, found in Rattus norvegicus (Rat).